Reading from the N-terminus, the 233-residue chain is Orotidine 5'-phosphate decarboxylase (233 aa).

Substrate is bound by residues D12, K34, 61–70, T116, R181, Q190, G210, and R211; that span reads DWKLHDIGAT. K63 acts as the Proton donor in catalysis.

This sequence belongs to the OMP decarboxylase family. Type 1 subfamily. In terms of assembly, homodimer.

It catalyses the reaction orotidine 5'-phosphate + H(+) = UMP + CO2. It functions in the pathway pyrimidine metabolism; UMP biosynthesis via de novo pathway; UMP from orotate: step 2/2. Catalyzes the decarboxylation of orotidine 5'-monophosphate (OMP) to uridine 5'-monophosphate (UMP). In Caulobacter vibrioides (strain ATCC 19089 / CIP 103742 / CB 15) (Caulobacter crescentus), this protein is Orotidine 5'-phosphate decarboxylase.